A 476-amino-acid chain; its full sequence is Aspartyl/glutamyl-tRNA(Asn/Gln) amidotransferase subunit B (476 aa).

Belongs to the GatB/GatE family. GatB subfamily. As to quaternary structure, heterotrimer of A, B and C subunits.

It catalyses the reaction L-glutamyl-tRNA(Gln) + L-glutamine + ATP + H2O = L-glutaminyl-tRNA(Gln) + L-glutamate + ADP + phosphate + H(+). It carries out the reaction L-aspartyl-tRNA(Asn) + L-glutamine + ATP + H2O = L-asparaginyl-tRNA(Asn) + L-glutamate + ADP + phosphate + 2 H(+). Its function is as follows. Allows the formation of correctly charged Asn-tRNA(Asn) or Gln-tRNA(Gln) through the transamidation of misacylated Asp-tRNA(Asn) or Glu-tRNA(Gln) in organisms which lack either or both of asparaginyl-tRNA or glutaminyl-tRNA synthetases. The reaction takes place in the presence of glutamine and ATP through an activated phospho-Asp-tRNA(Asn) or phospho-Glu-tRNA(Gln). This chain is Aspartyl/glutamyl-tRNA(Asn/Gln) amidotransferase subunit B, found in Clostridium botulinum (strain Eklund 17B / Type B).